A 353-amino-acid chain; its full sequence is Photosystem II D2 protein (353 aa).

At threonine 2 the chain carries N-acetylthreonine. The residue at position 2 (threonine 2) is a Phosphothreonine. A helical membrane pass occupies residues 41–61 (CAYFALGGWFTGTTFVTSWYT). Histidine 118 contacts chlorophyll a. The helical transmembrane segment at 125–141 (GFMLRQFELARSVQLRP) threads the bilayer. The pheophytin a site is built by glutamine 130 and asparagine 143. The chain crosses the membrane as a helical span at residues 153–166 (VFVSVFLIYPLGQS). Histidine 198 lines the chlorophyll a pocket. The helical transmembrane segment at 208-228 (AALLCAIHGATVENTLFEDGD) threads the bilayer. 2 residues coordinate a plastoquinone: histidine 215 and phenylalanine 262. Histidine 215 is a binding site for Fe cation. Histidine 269 lines the Fe cation pocket. A helical transmembrane segment spans residues 279-295 (GLWMSALGVVGLALNLR).

It belongs to the reaction center PufL/M/PsbA/D family. PSII is composed of 1 copy each of membrane proteins PsbA, PsbB, PsbC, PsbD, PsbE, PsbF, PsbH, PsbI, PsbJ, PsbK, PsbL, PsbM, PsbT, PsbX, PsbY, PsbZ, Psb30/Ycf12, at least 3 peripheral proteins of the oxygen-evolving complex and a large number of cofactors. It forms dimeric complexes. Requires The D1/D2 heterodimer binds P680, chlorophylls that are the primary electron donor of PSII, and subsequent electron acceptors. It shares a non-heme iron and each subunit binds pheophytin, quinone, additional chlorophylls, carotenoids and lipids. There is also a Cl(-1) ion associated with D1 and D2, which is required for oxygen evolution. The PSII complex binds additional chlorophylls, carotenoids and specific lipids. as cofactor.

The protein localises to the plastid. It localises to the chloroplast thylakoid membrane. It catalyses the reaction 2 a plastoquinone + 4 hnu + 2 H2O = 2 a plastoquinol + O2. Its function is as follows. Photosystem II (PSII) is a light-driven water:plastoquinone oxidoreductase that uses light energy to abstract electrons from H(2)O, generating O(2) and a proton gradient subsequently used for ATP formation. It consists of a core antenna complex that captures photons, and an electron transfer chain that converts photonic excitation into a charge separation. The D1/D2 (PsbA/PsbD) reaction center heterodimer binds P680, the primary electron donor of PSII as well as several subsequent electron acceptors. D2 is needed for assembly of a stable PSII complex. This is Photosystem II D2 protein from Morus indica (Mulberry).